The sequence spans 154 residues: Ribosomal RNA large subunit methyltransferase H (154 aa).

Residues L76, G103, and 122-127 (LSPLTL) contribute to the S-adenosyl-L-methionine site.

The protein belongs to the RNA methyltransferase RlmH family. As to quaternary structure, homodimer.

The protein resides in the cytoplasm. It carries out the reaction pseudouridine(1915) in 23S rRNA + S-adenosyl-L-methionine = N(3)-methylpseudouridine(1915) in 23S rRNA + S-adenosyl-L-homocysteine + H(+). Specifically methylates the pseudouridine at position 1915 (m3Psi1915) in 23S rRNA. The protein is Ribosomal RNA large subunit methyltransferase H of Wolinella succinogenes (strain ATCC 29543 / DSM 1740 / CCUG 13145 / JCM 31913 / LMG 7466 / NCTC 11488 / FDC 602W) (Vibrio succinogenes).